We begin with the raw amino-acid sequence, 344 residues long: Plastoglobule-localized metallopeptidase 48, chloroplastic (344 aa).

The transit peptide at 1–47 directs the protein to the chloroplast; that stretch reads MAVSVSAPVLSLCYNQSGELSRSLGYRLPKKVGFSSGRRSVSYIGFG. The next 2 helical transmembrane spans lie at 102–122 and 169–189; these read LLGSMTEQIMLLENIGTSVLV and FIVVHTSLIELLTSAELQAVL. Histidine 191 is a binding site for Zn(2+). Glutamate 192 is a catalytic residue. Zn(2+) is bound at residue histidine 195. The chain crosses the membrane as a helical span at residues 201-221; the sequence is GVWLTFANILTLGAYTVPAFG. Glutamate 240 is a Zn(2+) binding site. A helical membrane pass occupies residues 256–272; the sequence is VVVSVLMKLAGGCPSIA.

The protein belongs to the peptidase M48 family. M48D subfamily. Interacts with plastoglobule (PG) core proteins ABC1K3, PES1 and CCD4. It depends on Zn(2+) as a cofactor. As to expression, mostly expressed in flowers (e.g. sepals, petals and stamen), seeds, leaves and cotyledons.

It is found in the plastid. Its subcellular location is the chloroplast. It localises to the plastoglobule. The protein resides in the chloroplast membrane. Metalloendopeptidase with a Zn-dependent proteolytic activity and substrate cleavage upstream of hydrophobic residues. Positive regulator of senescence, probably by degrading CCD4, thus participating in the controlled removal of carotenoids from the thylakoid membrane during the senescence process. This is Plastoglobule-localized metallopeptidase 48, chloroplastic from Arabidopsis thaliana (Mouse-ear cress).